The primary structure comprises 87 residues: Cell division topological specificity factor (87 aa).

This sequence belongs to the MinE family.

Functionally, prevents the cell division inhibition by proteins MinC and MinD at internal division sites while permitting inhibition at polar sites. This ensures cell division at the proper site by restricting the formation of a division septum at the midpoint of the long axis of the cell. This chain is Cell division topological specificity factor, found in Aliivibrio fischeri (strain ATCC 700601 / ES114) (Vibrio fischeri).